The chain runs to 151 residues: Methylated-DNA--protein-cysteine methyltransferase (151 aa).

The active-site Nucleophile; methyl group acceptor is C119.

It belongs to the MGMT family.

The protein resides in the cytoplasm. The catalysed reaction is a 6-O-methyl-2'-deoxyguanosine in DNA + L-cysteinyl-[protein] = S-methyl-L-cysteinyl-[protein] + a 2'-deoxyguanosine in DNA. The enzyme catalyses a 4-O-methyl-thymidine in DNA + L-cysteinyl-[protein] = a thymidine in DNA + S-methyl-L-cysteinyl-[protein]. Its function is as follows. Involved in the cellular defense against the biological effects of O6-methylguanine (O6-MeG) and O4-methylthymine (O4-MeT) in DNA. Repairs the methylated nucleobase in DNA by stoichiometrically transferring the methyl group to a cysteine residue in the enzyme. This is a suicide reaction: the enzyme is irreversibly inactivated. The polypeptide is Methylated-DNA--protein-cysteine methyltransferase (Saccharolobus islandicus (strain M.16.27) (Sulfolobus islandicus)).